Here is a 474-residue protein sequence, read N- to C-terminus: Probable periplasmic serine endoprotease DegP-like (474 aa).

The N-terminal stretch at M1–A26 is a signal peptide. Active-site charge relay system residues include H116, D146, and S219. Substrate-binding positions include G217 to S219 and L274 to I278. 2 PDZ domains span residues L263–G354 and T360–G462.

Belongs to the peptidase S1C family.

It is found in the periplasm. The catalysed reaction is Acts on substrates that are at least partially unfolded. The cleavage site P1 residue is normally between a pair of hydrophobic residues, such as Val-|-Val.. Its function is as follows. Might be efficient in the degradation of transiently denatured and unfolded proteins which accumulate in the periplasm following stress conditions. This is Probable periplasmic serine endoprotease DegP-like (mucD) from Halomonas elongata (strain ATCC 33173 / DSM 2581 / NBRC 15536 / NCIMB 2198 / 1H9).